Here is a 376-residue protein sequence, read N- to C-terminus: D-alanine--D-alanine ligase (376 aa).

An ATP-grasp domain is found at 153–366 (KLLLAGQGLP…YPELVHRLIQ (214 aa)). 185-240 (VEALGYPVFVKPARAGSSIGITRVTSREGLAAAVAEAVSHDPKVVVEAALVGREIE) lines the ATP pocket. Positions 317, 333, and 335 each coordinate Mg(2+).

It belongs to the D-alanine--D-alanine ligase family. Requires Mg(2+) as cofactor. Mn(2+) is required as a cofactor.

Its subcellular location is the cytoplasm. The catalysed reaction is 2 D-alanine + ATP = D-alanyl-D-alanine + ADP + phosphate + H(+). It participates in cell wall biogenesis; peptidoglycan biosynthesis. Functionally, cell wall formation. The protein is D-alanine--D-alanine ligase of Kineococcus radiotolerans (strain ATCC BAA-149 / DSM 14245 / SRS30216).